A 240-amino-acid chain; its full sequence is Large ribosomal subunit protein uL3 (240 aa).

2 disordered regions span residues 138 to 158 (SISH…KTFK) and 215 to 240 (EAPL…SAEG). At Gln-151 the chain carries N5-methylglutamine.

The protein belongs to the universal ribosomal protein uL3 family. Part of the 50S ribosomal subunit. Forms a cluster with proteins L14 and L19. Post-translationally, methylated by PrmB.

One of the primary rRNA binding proteins, it binds directly near the 3'-end of the 23S rRNA, where it nucleates assembly of the 50S subunit. This is Large ribosomal subunit protein uL3 from Beijerinckia indica subsp. indica (strain ATCC 9039 / DSM 1715 / NCIMB 8712).